The following is a 79-amino-acid chain: Conotoxin VnMKLT1-01121 (79 aa).

An N-terminal signal peptide occupies residues 1-22; the sequence is MKLTCMMIVAVLFLTAWTFVTA. Positions 23-48 are excised as a propeptide; it reads DDSRNGLEYLFPKAHYEMNPEASKLN. 3 cysteine pairs are disulfide-bonded: Cys-53–Cys-70, Cys-60–Cys-74, and Cys-69–Cys-78.

The protein belongs to the conotoxin O1 superfamily. Expressed by the venom duct.

The protein resides in the secreted. In Conus ventricosus (Mediterranean cone), this protein is Conotoxin VnMKLT1-01121.